Reading from the N-terminus, the 540-residue chain is Probable feruloyl esterase B-1 (540 aa).

The first 18 residues, M1–A18, serve as a signal peptide directing secretion. N-linked (GlcNAc...) asparagine glycans are attached at residues N28, N49, N66, N95, N113, and N195. Intrachain disulfides connect C41/C90 and C76/C129. 3 disulfide bridges follow: C202–C458, C271–C288, and C297–C308. The active-site Acyl-ester intermediate is the S203. An N-linked (GlcNAc...) asparagine glycan is attached at N234. The Ca(2+) site is built by D272, D275, A277, D279, and I281. 3 N-linked (GlcNAc...) asparagine glycosylation sites follow: N298, N328, and N367. Catalysis depends on charge relay system residues D417 and H457. N-linked (GlcNAc...) asparagine glycosylation occurs at N506. A disulfide bridge links C517 with C539.

It belongs to the tannase family. Homodimer.

The protein localises to the secreted. It catalyses the reaction feruloyl-polysaccharide + H2O = ferulate + polysaccharide.. Its function is as follows. Involved in degradation of plant cell walls. Hydrolyzes the feruloyl-arabinose ester bond in arabinoxylans as well as the feruloyl-galactose and feruloyl-arabinose ester bonds in pectin. The sequence is that of Probable feruloyl esterase B-1 (faeB-1) from Aspergillus oryzae (strain ATCC 42149 / RIB 40) (Yellow koji mold).